We begin with the raw amino-acid sequence, 219 residues long: ATP-dependent dethiobiotin synthetase BioD (219 aa).

Residue 12 to 17 (GVGKTI) participates in ATP binding. Mg(2+) is bound at residue Thr-16. Lys-32 is an active-site residue. Residues Asp-43 and 96–99 (ETSG) contribute to the ATP site. Mg(2+) is bound by residues Asp-43 and Glu-96.

The protein belongs to the dethiobiotin synthetase family. In terms of assembly, homodimer. Requires Mg(2+) as cofactor.

It is found in the cytoplasm. It catalyses the reaction (7R,8S)-7,8-diammoniononanoate + CO2 + ATP = (4R,5S)-dethiobiotin + ADP + phosphate + 3 H(+). Its pathway is cofactor biosynthesis; biotin biosynthesis; biotin from 7,8-diaminononanoate: step 1/2. Catalyzes a mechanistically unusual reaction, the ATP-dependent insertion of CO2 between the N7 and N8 nitrogen atoms of 7,8-diaminopelargonic acid (DAPA, also called 7,8-diammoniononanoate) to form a ureido ring. This chain is ATP-dependent dethiobiotin synthetase BioD, found in Chlamydia pneumoniae (Chlamydophila pneumoniae).